The following is a 108-amino-acid chain: TYRO protein tyrosine kinase-binding protein (108 aa).

A signal peptide spans 1 to 25; it reads MGRLGPSNGLLPLLLAVGGFSLVQA. The Extracellular portion of the chain corresponds to 26-36; the sequence is QRECSCSAVSP. A helical transmembrane segment spans residues 37–57; sequence GILAGIVLGDLVLTLLIALAV. Ca(2+) is bound at residue Asp-46. Topologically, residues 58–108 are cytoplasmic; sequence YSLGRLVPRTRGAVDVTRKQHIAETESAYQELQGQRSDVYSDLNTQRQYYK. Positions 75-103 constitute an ITAM domain; it reads RKQHIAETESAYQELQGQRSDVYSDLNTQ. Phosphotyrosine occurs at positions 86 and 97.

Belongs to the TYROBP family. Homodimer; disulfide-linked. Homotrimer; disulfide-linked. Homotetramer; disulfide-linked. Homotrimers and homotetramers form when low levels of partner receptors are available and is competitive with assembly with interacting receptors. They may represent alternative oligomerization states or may be intermediates in the receptor assembly process. Binding of a metal cation aids in homooligomerization through coordination of the metal ion by the subunits of the oligomer. Interacts with TREM1. Interacts with TREM2. Interacts with CLECSF5. Interacts with CD300LB and CD300C2. Interacts with CD300E. Interacts (via ITAM domain) with SYK (via SH2 domains); activates SYK mediating neutrophils and macrophages integrin-mediated activation. Interacts with KLRC2. Interacts with CD300H. Interacts with KLRD1. Interacts with SIGLEC1. In terms of processing, following ligand binding by associated receptors, tyrosine phosphorylated in the ITAM domain which leads to activation of additional tyrosine kinases and subsequent cell activation. In terms of tissue distribution, highly expressed in spleen, liver and thymus. Weakly expressed in lymph nodes. Expressed in peripheral blood leukocytes, granulocytes, macrophages, and monocytes. LPS does not increase expression in granulocytes.

It is found in the cell membrane. Functionally, adapter protein which non-covalently associates with activating receptors found on the surface of a variety of immune cells to mediate signaling and cell activation following ligand binding by the receptors. TYROBP is tyrosine-phosphorylated in the ITAM domain following ligand binding by the associated receptors which leads to activation of additional tyrosine kinases and subsequent cell activation. Also has an inhibitory role in some cells. Non-covalently associates with activating receptors of the CD300 family to mediate cell activation. Also mediates cell activation through association with activating receptors of the CD200R family. Required for neutrophil activation mediated by integrin. Required for the activation of myeloid cells mediated by the CLEC5A/MDL1 receptor. Associates with natural killer (NK) cell receptors such as the KLRD1/KLRC2 heterodimer to mediate NK cell activation. Associates with TREM1 to mediate activation of neutrophils and monocytes. Associates with TREM2 on monocyte-derived dendritic cells to mediate up-regulation of chemokine receptor CCR7 and dendritic cell maturation and survival. Association with TREM2 mediates cytokine-induced formation of multinucleated giant cells which are formed by the fusion of macrophages. Stabilizes the TREM2 C-terminal fragment (TREM2-CTF) produced by TREM2 ectodomain shedding which suppresses the release of pro-inflammatory cytokines. In microglia, required with TREM2 for phagocytosis of apoptotic neurons. Required with ITGAM/CD11B in microglia to control production of microglial superoxide ions which promote the neuronal apoptosis that occurs during brain development. Promotes pro-inflammatory responses in microglia following nerve injury which accelerates degeneration of injured neurons. Positively regulates the expression of the IRAK3/IRAK-M kinase and IL10 production by liver dendritic cells and inhibits their T cell allosimulatory ability. Negatively regulates B cell proliferation. Required for CSF1-mediated osteoclast cytoskeletal organization. Positively regulates multinucleation during osteoclast development. This Sus scrofa (Pig) protein is TYRO protein tyrosine kinase-binding protein.